The following is a 212-amino-acid chain: Ribonuclease HII (212 aa).

The RNase H type-2 domain occupies 18–212 (GCVFGVDEAG…APVAQQELFR (195 aa)). D24, E25, and D118 together coordinate a divalent metal cation.

This sequence belongs to the RNase HII family. The cofactor is Mn(2+). Mg(2+) is required as a cofactor.

It is found in the cytoplasm. The enzyme catalyses Endonucleolytic cleavage to 5'-phosphomonoester.. In terms of biological role, endonuclease that specifically degrades the RNA of RNA-DNA hybrids. The chain is Ribonuclease HII from Erythrobacter litoralis (strain HTCC2594).